The chain runs to 454 residues: F-box protein At1g67130 (454 aa).

The region spanning 4 to 53 is the F-box domain; the sequence is GETLDSIPTDLILDILSRLPTKSIARFHCVSKLWSSMLASQDFTRLFVNR.

This Arabidopsis thaliana (Mouse-ear cress) protein is F-box protein At1g67130.